Reading from the N-terminus, the 305-residue chain is Insulin-like growth factor-binding protein 2 (305 aa).

Residues 1–34 (MLPRLGGPALPLLLPSLLLLLLLGAGGCGPGVRA) form the signal peptide. Residues 36–118 (VLFRCPPCTP…VTGAGTCEKR (83 aa)) enclose the IGFBP N-terminal domain. 9 disulfide bridges follow: Cys40–Cys68, Cys43–Cys70, Cys51–Cys71, Cys59–Cys74, Cys82–Cys95, Cys89–Cys115, Cys207–Cys241, Cys252–Cys263, and Cys265–Cys286. Residues 204–286 (RTPCQQELDQ…APTIRGDPEC (83 aa)) form the Thyroglobulin type-1 domain. The Cell attachment site motif lies at 281 to 283 (RGD).

Interacts with IGF1. Interacts with IGF2. Interacts (via RGD motif) with integrin alpha5/ITGA5; this interaction induces cell migration, adhesion or apoptosis according to the context. Interacts with PTPRB; this interaction leads to PTPRB dimerization and inactivation. In terms of processing, cleaved by MMP9 leading to release of free IGF2 from IGFBP2-IGF2 complex, which contributes to enhance the motility and the growth of astrocytes. Post-translationally, O-glycosylated. As to expression, highly expressed in adult liver, but also in kidney, lung, brain, spleen, testis and ovary.

Its subcellular location is the secreted. Its function is as follows. Multifunctional protein that plays a critical role in regulating the availability of IGFs such as IGF1 and IGF2 to their receptors and thereby regulates IGF-mediated cellular processes including proliferation, differentiation, and apoptosis in a cell-type specific manner. Functions coordinately with receptor protein tyrosine phosphatase beta/PTPRB and the IGF1 receptor to regulate IGF1-mediated signaling by stimulating the phosphorylation of PTEN leading to its inactivation and AKT1 activation. Plays a positive role in cell migration via interaction with integrin alpha5/ITGA5 through an RGD motif. Additionally, interaction with ITGA5/ITGB1 enhances the adhesion of endothelial progenitor cells to endothelial cells. Upon mitochondrial damage, facilitates apoptosis with ITGA5 of podocytes, and then activates the phosphorylation of focal adhesion kinase (FAK)-mediated mitochondrial injury. The polypeptide is Insulin-like growth factor-binding protein 2 (Igfbp2) (Mus musculus (Mouse)).